Here is a 384-residue protein sequence, read N- to C-terminus: Small ribosomal subunit protein mS31 (384 aa).

A mitochondrion-targeting transit peptide spans 1–54; sequence MLHRIPAFLRPRPFSGLPLSCGNRDVSVAVLPAAQSGAVRTENNIQRHFCTSRS. The segment at 101–136 is disordered; the sequence is TANVKTPKPRGRKPSASLEATVDRLQKAPEDPPKKR. Over residues 121 to 136 the composition is skewed to basic and acidic residues; it reads TVDRLQKAPEDPPKKR.

It belongs to the mitochondrion-specific ribosomal protein mS31 family. As to quaternary structure, component of the mitochondrial ribosome small subunit (28S) which comprises a 12S rRNA and about 30 distinct proteins.

The protein localises to the mitochondrion. The polypeptide is Small ribosomal subunit protein mS31 (Mrps31) (Mus musculus (Mouse)).